The following is an 82-amino-acid chain: Small ribosomal subunit protein bS16 (82 aa).

It belongs to the bacterial ribosomal protein bS16 family.

The polypeptide is Small ribosomal subunit protein bS16 (Methylobacillus flagellatus (strain ATCC 51484 / DSM 6875 / VKM B-1610 / KT)).